The chain runs to 60 residues: Large ribosomal subunit protein uL30 (60 aa).

Belongs to the universal ribosomal protein uL30 family. Part of the 50S ribosomal subunit.

The polypeptide is Large ribosomal subunit protein uL30 (Leifsonia xyli subsp. xyli (strain CTCB07)).